The following is a 455-amino-acid chain: Glycylpeptide N-tetradecanoyltransferase (455 aa).

Position 38-41 (38-41) interacts with tetradecanoyl-CoA; it reads HKFW. The interval 168–204 is myristoyl CoA-binding; it reads INFLCVHKQLRSKRLTPVLIKEITRRVNKCDIWHALY. Leu455 acts as the Proton acceptor; via carboxylate in catalysis.

It belongs to the NMT family. In terms of assembly, monomer. The N-terminus is blocked.

It localises to the cytoplasm. It carries out the reaction N-terminal glycyl-[protein] + tetradecanoyl-CoA = N-tetradecanoylglycyl-[protein] + CoA + H(+). Its activity is regulated as follows. Inhibited by diethylpyrocarbonate. Competitively inhibited by S-(2-oxo)pentadecyl-CoA, a non hydrolysable myristoyl-CoA analog, and by SC-58272, a peptidomimetic derived from the N-terminal sequence of a natural substrate. Adds a myristoyl group to the N-terminal glycine residue of certain cellular proteins. Substrate specificity requires an N-terminal glycine in the nascent polypeptide substrates. Uncharged amino acids are preferred at position 2 while neutral residues are favored at positions 3 and 4. Ser is present at position 5 in almost all known N-myristoyl proteins and Lys is commonly encountered at postion 6. This Saccharomyces cerevisiae (strain ATCC 204508 / S288c) (Baker's yeast) protein is Glycylpeptide N-tetradecanoyltransferase (NMT1).